Here is a 428-residue protein sequence, read N- to C-terminus: Light-independent protochlorophyllide reductase subunit N (428 aa).

[4Fe-4S] cluster contacts are provided by Cys-31, Cys-56, and Cys-117.

It belongs to the BchN/ChlN family. Protochlorophyllide reductase is composed of three subunits; BchL, BchN and BchB. Forms a heterotetramer of two BchB and two BchN subunits. [4Fe-4S] cluster is required as a cofactor.

The enzyme catalyses chlorophyllide a + oxidized 2[4Fe-4S]-[ferredoxin] + 2 ADP + 2 phosphate = protochlorophyllide a + reduced 2[4Fe-4S]-[ferredoxin] + 2 ATP + 2 H2O. It functions in the pathway porphyrin-containing compound metabolism; bacteriochlorophyll biosynthesis (light-independent). Functionally, component of the dark-operative protochlorophyllide reductase (DPOR) that uses Mg-ATP and reduced ferredoxin to reduce ring D of protochlorophyllide (Pchlide) to form chlorophyllide a (Chlide). This reaction is light-independent. The NB-protein (BchN-BchB) is the catalytic component of the complex. In Rhodopseudomonas palustris (strain BisB18), this protein is Light-independent protochlorophyllide reductase subunit N.